Consider the following 167-residue polypeptide: NADH-quinone oxidoreductase subunit I 1 (167 aa).

2 consecutive 4Fe-4S ferredoxin-type domains span residues 58–88 (LRRY…IDAE) and 98–127 (TRYD…EGPN). Positions 68, 71, 74, 78, 107, 110, 113, and 117 each coordinate [4Fe-4S] cluster.

Belongs to the complex I 23 kDa subunit family. In terms of assembly, NDH-1 is composed of 14 different subunits. Subunits NuoA, H, J, K, L, M, N constitute the membrane sector of the complex. [4Fe-4S] cluster serves as cofactor.

It localises to the cell inner membrane. It catalyses the reaction a quinone + NADH + 5 H(+)(in) = a quinol + NAD(+) + 4 H(+)(out). Its function is as follows. NDH-1 shuttles electrons from NADH, via FMN and iron-sulfur (Fe-S) centers, to quinones in the respiratory chain. The immediate electron acceptor for the enzyme in this species is believed to be ubiquinone. Couples the redox reaction to proton translocation (for every two electrons transferred, four hydrogen ions are translocated across the cytoplasmic membrane), and thus conserves the redox energy in a proton gradient. The sequence is that of NADH-quinone oxidoreductase subunit I 1 from Cereibacter sphaeroides (strain ATCC 17029 / ATH 2.4.9) (Rhodobacter sphaeroides).